Reading from the N-terminus, the 225-residue chain is DNA repair and recombination protein RadB (225 aa).

It belongs to the eukaryotic RecA-like protein family. RadB subfamily.

Involved in DNA repair and in homologous recombination. May regulate the cleavage reactions of the branch-structured DNA. Has a very weak ATPase activity that is not stimulated by DNA. Binds DNA but does not promote DNA strands exchange. This is DNA repair and recombination protein RadB from Methanococcoides burtonii (strain DSM 6242 / NBRC 107633 / OCM 468 / ACE-M).